A 382-amino-acid polypeptide reads, in one-letter code: Lipid-A-disaccharide synthase (382 aa).

Belongs to the LpxB family.

It catalyses the reaction 2-N,3-O-bis[(3R)-3-hydroxytetradecanoyl]-alpha-D-glucosaminyl 1-phosphate + UDP-2-N,3-O-bis[(3R)-3-hydroxytetradecanoyl]-alpha-D-glucosamine = lipid A disaccharide (E. coli) + UDP + H(+). It carries out the reaction a lipid X + a UDP-2-N,3-O-bis[(3R)-3-hydroxyacyl]-alpha-D-glucosamine = a lipid A disaccharide + UDP + H(+). The protein operates within glycolipid biosynthesis; lipid IV(A) biosynthesis; lipid IV(A) from (3R)-3-hydroxytetradecanoyl-[acyl-carrier-protein] and UDP-N-acetyl-alpha-D-glucosamine: step 5/6. In terms of biological role, condensation of UDP-2,3-diacylglucosamine and 2,3-diacylglucosamine-1-phosphate to form lipid A disaccharide, a precursor of lipid A, a phosphorylated glycolipid that anchors the lipopolysaccharide to the outer membrane of the cell. The chain is Lipid-A-disaccharide synthase from Escherichia coli (strain SMS-3-5 / SECEC).